The following is a 501-amino-acid chain: ATP synthase subunit alpha (501 aa).

170-177 (GDRQTGKS) contributes to the ATP binding site.

This sequence belongs to the ATPase alpha/beta chains family. In terms of assembly, F-type ATPases have 2 components, CF(1) - the catalytic core - and CF(0) - the membrane proton channel. CF(1) has five subunits: alpha(3), beta(3), gamma(1), delta(1), epsilon(1). CF(0) has three main subunits: a(1), b(2) and c(9-12). The alpha and beta chains form an alternating ring which encloses part of the gamma chain. CF(1) is attached to CF(0) by a central stalk formed by the gamma and epsilon chains, while a peripheral stalk is formed by the delta and b chains.

It is found in the cell membrane. It carries out the reaction ATP + H2O + 4 H(+)(in) = ADP + phosphate + 5 H(+)(out). In terms of biological role, produces ATP from ADP in the presence of a proton gradient across the membrane. The alpha chain is a regulatory subunit. The chain is ATP synthase subunit alpha from Acholeplasma laidlawii (strain PG-8A).